We begin with the raw amino-acid sequence, 342 residues long: Dihydroorotate dehydrogenase (quinone) (342 aa).

Residues 61–65 (AGLDK) and threonine 85 contribute to the FMN site. Position 65 (lysine 65) interacts with substrate. 110–114 (NRMGF) lines the substrate pocket. 2 residues coordinate FMN: asparagine 138 and asparagine 171. Asparagine 171 contributes to the substrate binding site. Catalysis depends on serine 174, which acts as the Nucleophile. Asparagine 176 lines the substrate pocket. 2 residues coordinate FMN: lysine 216 and threonine 244. 245–246 (NT) contacts substrate. FMN is bound by residues glycine 267, glycine 296, and 317–318 (YS).

The protein belongs to the dihydroorotate dehydrogenase family. Type 2 subfamily. In terms of assembly, monomer. FMN serves as cofactor.

It is found in the cell membrane. It carries out the reaction (S)-dihydroorotate + a quinone = orotate + a quinol. Its pathway is pyrimidine metabolism; UMP biosynthesis via de novo pathway; orotate from (S)-dihydroorotate (quinone route): step 1/1. Functionally, catalyzes the conversion of dihydroorotate to orotate with quinone as electron acceptor. This chain is Dihydroorotate dehydrogenase (quinone), found in Pseudomonas aeruginosa (strain LESB58).